Here is a 351-residue protein sequence, read N- to C-terminus: UDP-3-O-acylglucosamine N-acyltransferase (351 aa).

His240 acts as the Proton acceptor in catalysis.

The protein belongs to the transferase hexapeptide repeat family. LpxD subfamily. In terms of assembly, homotrimer.

The catalysed reaction is a UDP-3-O-[(3R)-3-hydroxyacyl]-alpha-D-glucosamine + a (3R)-hydroxyacyl-[ACP] = a UDP-2-N,3-O-bis[(3R)-3-hydroxyacyl]-alpha-D-glucosamine + holo-[ACP] + H(+). The protein operates within bacterial outer membrane biogenesis; LPS lipid A biosynthesis. Functionally, catalyzes the N-acylation of UDP-3-O-acylglucosamine using 3-hydroxyacyl-ACP as the acyl donor. Is involved in the biosynthesis of lipid A, a phosphorylated glycolipid that anchors the lipopolysaccharide to the outer membrane of the cell. In Pseudomonas syringae pv. tomato (strain ATCC BAA-871 / DC3000), this protein is UDP-3-O-acylglucosamine N-acyltransferase.